The sequence spans 389 residues: Chalcone synthase A (389 aa).

Residue Cys-164 is part of the active site.

This sequence belongs to the thiolase-like superfamily. Chalcone/stilbene synthases family. As to expression, major expressed member of the gene family in various floral tissues and in seedlings treated with UV light. It is relatively low expressed in tissue culture material.

It carries out the reaction (E)-4-coumaroyl-CoA + 3 malonyl-CoA + 3 H(+) = 2',4,4',6'-tetrahydroxychalcone + 3 CO2 + 4 CoA. It participates in secondary metabolite biosynthesis; flavonoid biosynthesis. Functionally, the primary product of this enzyme is 4,2',4',6'-tetrahydroxychalcone (also termed naringenin-chalcone or chalcone) which can under specific conditions spontaneously isomerize into naringenin. The polypeptide is Chalcone synthase A (CHSA) (Petunia hybrida (Petunia)).